A 182-amino-acid polypeptide reads, in one-letter code: Adenine phosphoribosyltransferase (182 aa).

It belongs to the purine/pyrimidine phosphoribosyltransferase family. As to quaternary structure, homodimer.

Its subcellular location is the cytoplasm. The catalysed reaction is AMP + diphosphate = 5-phospho-alpha-D-ribose 1-diphosphate + adenine. It functions in the pathway purine metabolism; AMP biosynthesis via salvage pathway; AMP from adenine: step 1/1. Functionally, catalyzes a salvage reaction resulting in the formation of AMP, that is energically less costly than de novo synthesis. The sequence is that of Adenine phosphoribosyltransferase from Pseudomonas syringae pv. syringae (strain B728a).